A 622-amino-acid chain; its full sequence is MSLDISQFPVLAQANTPNELRQLPQALLPQVADELREFLLKSVGISSGHFASGLGTVELTVALHYVYNTPFDRLIWDVGHQAYPHKILTGRRDKMHTIRQKDGLHPFPWREESEYDTFSVGHSGTSISAALAMAIAAEKEQAGRKVVAVIGDGAMTGGMVFEAMNHAGDLHNDMLVVLNDNEMSISENVGALNNHLAQLMSGRFYTTLREGGKKVLKGMPVIKEMAKRTEEHLKGMVVPGTLFEELGFNYIGPIDGHDVDALVETMRNMRNLKGPQVLHIMTKKGRGYEPAEKDPIGWHAVPKFDPSLFKKPATKPGLPTFSQVFGKWLCDIAEQDEKVLAITPAMREGSGMVEFSQRFPKQYFDAAIAEQHAVTLSAGFACEGFKPVVAIYSTFLQRAYDQLIHDVALQQLPVLFAIDRGGIVGADGPTHQGAFDLSFMRCIPNMVIMAPSDENECRQMLYTGYCYDAGPSAVRYPRGCATGATQVEAMTALPIGKGVIKRVGKRIAILNFGTLLASALTAAESLDATVVDMRFVKPLDVDLVKEMAQTHEVLVTVEENAIMGGAGAGVLEQLQKLRMPKAVLQIGLPDEFIKHGSPEEVTHDLQLDAEGILAQINAYLAQ.

Thiamine diphosphate is bound by residues H80 and 121–123; that span reads GHS. D152 is a Mg(2+) binding site. Residues 153–154, N181, Y288, and E370 each bind thiamine diphosphate; that span reads GA. Residue N181 participates in Mg(2+) binding.

This sequence belongs to the transketolase family. DXPS subfamily. In terms of assembly, homodimer. It depends on Mg(2+) as a cofactor. The cofactor is thiamine diphosphate.

It carries out the reaction D-glyceraldehyde 3-phosphate + pyruvate + H(+) = 1-deoxy-D-xylulose 5-phosphate + CO2. The protein operates within metabolic intermediate biosynthesis; 1-deoxy-D-xylulose 5-phosphate biosynthesis; 1-deoxy-D-xylulose 5-phosphate from D-glyceraldehyde 3-phosphate and pyruvate: step 1/1. Functionally, catalyzes the acyloin condensation reaction between C atoms 2 and 3 of pyruvate and glyceraldehyde 3-phosphate to yield 1-deoxy-D-xylulose-5-phosphate (DXP). This Shewanella baltica (strain OS185) protein is 1-deoxy-D-xylulose-5-phosphate synthase.